Consider the following 755-residue polypeptide: Atypical kinase coq-8, mitochondrial (755 aa).

The tract at residues Q57–P78 is disordered. Over residues K67–P78 the composition is skewed to polar residues. Residues F435 to V443 and K457 contribute to the ATP site. D587 serves as the catalytic Proton acceptor.

This sequence belongs to the protein kinase superfamily. ADCK protein kinase family.

The protein resides in the mitochondrion. It participates in cofactor biosynthesis; ubiquinone biosynthesis. Atypical kinase involved in the biosynthesis of coenzyme Q, also named ubiquinone, an essential lipid-soluble electron transporter for aerobic cellular respiration. Its substrate specificity is still unclear: may act as a protein kinase that mediates phosphorylation of coq-3. According to other reports, acts as a small molecule kinase, possibly a lipid kinase that phosphorylates a prenyl lipid in the ubiquinone biosynthesis pathway, as suggested by its ability to bind coenzyme Q lipid intermediates. This is Atypical kinase coq-8, mitochondrial (coq-8) from Caenorhabditis elegans.